We begin with the raw amino-acid sequence, 748 residues long: Polyribonucleotide nucleotidyltransferase (748 aa).

Mg(2+) contacts are provided by D484 and D490. Positions 551-610 (PRIETMSVPKDKIRDVIGTGGKVIREIVATTGAKVDIEDDGTVRLSSSDPANIEAAREWI) constitute a KH domain. In terms of domain architecture, S1 motif spans 620 to 688 (GKIYNGKVVN…NRGKVRLSMR (69 aa)). The tract at residues 693–748 (ETGAELDDNRPPRENAERRGGERPRRDRGPRRESGDRPARRDMEPEFAPAFLRKDS) is disordered. The span at 699-736 (DDNRPPRENAERRGGERPRRDRGPRRESGDRPARRDME) shows a compositional bias: basic and acidic residues.

It belongs to the polyribonucleotide nucleotidyltransferase family. Mg(2+) is required as a cofactor.

The protein resides in the cytoplasm. The enzyme catalyses RNA(n+1) + phosphate = RNA(n) + a ribonucleoside 5'-diphosphate. Functionally, involved in mRNA degradation. Catalyzes the phosphorolysis of single-stranded polyribonucleotides processively in the 3'- to 5'-direction. The polypeptide is Polyribonucleotide nucleotidyltransferase (Zymomonas mobilis subsp. mobilis (strain ATCC 31821 / ZM4 / CP4)).